The primary structure comprises 72 residues: Gene 35 protein (72 aa).

This is Gene 35 protein (35) from Mycobacterium phage L5 (Mycobacteriophage L5).